The chain runs to 521 residues: Glutamate--cysteine ligase (521 aa).

It belongs to the glutamate--cysteine ligase type 1 family. Type 1 subfamily.

The catalysed reaction is L-cysteine + L-glutamate + ATP = gamma-L-glutamyl-L-cysteine + ADP + phosphate + H(+). It functions in the pathway sulfur metabolism; glutathione biosynthesis; glutathione from L-cysteine and L-glutamate: step 1/2. The polypeptide is Glutamate--cysteine ligase (Aliivibrio salmonicida (strain LFI1238) (Vibrio salmonicida (strain LFI1238))).